Here is a 432-residue protein sequence, read N- to C-terminus: UDP-N-acetylmuramate--L-alanine ligase (432 aa).

Residue 109–115 (GAHGKST) coordinates ATP.

The protein belongs to the MurCDEF family.

It is found in the cytoplasm. It carries out the reaction UDP-N-acetyl-alpha-D-muramate + L-alanine + ATP = UDP-N-acetyl-alpha-D-muramoyl-L-alanine + ADP + phosphate + H(+). Its pathway is cell wall biogenesis; peptidoglycan biosynthesis. Cell wall formation. In Campylobacter jejuni subsp. jejuni serotype O:2 (strain ATCC 700819 / NCTC 11168), this protein is UDP-N-acetylmuramate--L-alanine ligase.